A 1047-amino-acid chain; its full sequence is uncharacterized protein (1047 aa).

At Lys-17 the chain carries N6-acetyllysine. 2 disordered regions span residues 172–208 (PPCS…GSFS) and 236–283 (RNSK…PQAL). Ser-208 is modified (phosphoserine). The segment covering 237 to 254 (NSKQAMSEGPSSPWTQLA) has biased composition (polar residues). The segment covering 268–283 (HYPPPHHPPPHPPQAL) has biased composition (pro residues). Phosphoserine is present on residues Ser-299 and Ser-391. Phosphothreonine is present on Thr-397. Disordered stretches follow at residues 448–469 (EKLQ…DSPV), 482–504 (ECQS…PVID), 519–567 (PAPE…LRGS), 668–690 (PSTP…GPIG), 714–763 (VAVA…GDSL), 931–1004 (EAGA…TLKA), and 1021–1047 (PTWG…SHHL). Phosphoserine occurs at positions 455, 496, and 497. Composition is skewed to low complexity over residues 729–741 (PARA…ARDP) and 751–762 (PAPASTSAPGDS). Ser-936, Ser-956, Ser-988, and Ser-996 each carry phosphoserine. Over residues 978-996 (AAAGEESCGASPTPATSAS) the composition is skewed to low complexity.

This is an uncharacterized protein from Homo sapiens (Human).